A 197-amino-acid chain; its full sequence is Dephospho-CoA kinase (197 aa).

The region spanning 2-197 (IIGLTGGIAS…GAIKDLANLV (196 aa)) is the DPCK domain. 10–15 (ASGKST) is a binding site for ATP.

It belongs to the CoaE family.

Its subcellular location is the cytoplasm. It catalyses the reaction 3'-dephospho-CoA + ATP = ADP + CoA + H(+). Its pathway is cofactor biosynthesis; coenzyme A biosynthesis; CoA from (R)-pantothenate: step 5/5. Catalyzes the phosphorylation of the 3'-hydroxyl group of dephosphocoenzyme A to form coenzyme A. This is Dephospho-CoA kinase from Streptococcus thermophilus (strain CNRZ 1066).